The sequence spans 155 residues: Superoxide dismutase [Cu-Zn] (155 aa).

Cu cation contacts are provided by histidine 47, histidine 49, and histidine 64. A disulfide bridge links cysteine 58 with cysteine 147. Histidine 64, histidine 72, histidine 81, and aspartate 84 together coordinate Zn(2+). Histidine 121 provides a ligand contact to Cu cation. Position 144 (arginine 144) interacts with substrate.

The protein belongs to the Cu-Zn superoxide dismutase family. Homodimer. It depends on Cu cation as a cofactor. Zn(2+) serves as cofactor.

The protein resides in the cytoplasm. The enzyme catalyses 2 superoxide + 2 H(+) = H2O2 + O2. Destroys radicals which are normally produced within the cells and which are toxic to biological systems. The polypeptide is Superoxide dismutase [Cu-Zn] (SOD1) (Kluyveromyces lactis (strain ATCC 8585 / CBS 2359 / DSM 70799 / NBRC 1267 / NRRL Y-1140 / WM37) (Yeast)).